The chain runs to 292 residues: Elongation factor Ts (292 aa).

Positions 80–83 (TDFV) are involved in Mg(2+) ion dislocation from EF-Tu.

This sequence belongs to the EF-Ts family.

The protein resides in the cytoplasm. Associates with the EF-Tu.GDP complex and induces the exchange of GDP to GTP. It remains bound to the aminoacyl-tRNA.EF-Tu.GTP complex up to the GTP hydrolysis stage on the ribosome. This is Elongation factor Ts from Limosilactobacillus fermentum (strain NBRC 3956 / LMG 18251) (Lactobacillus fermentum).